Here is a 433-residue protein sequence, read N- to C-terminus: Enolase (433 aa).

Gln167 is a binding site for (2R)-2-phosphoglycerate. Glu209 (proton donor) is an active-site residue. Mg(2+) is bound by residues Asp246, Glu291, and Asp318. The (2R)-2-phosphoglycerate site is built by Lys343, Arg372, Ser373, and Lys394. The Proton acceptor role is filled by Lys343.

It belongs to the enolase family. In terms of assembly, component of the RNA degradosome, a multiprotein complex involved in RNA processing and mRNA degradation. Mg(2+) is required as a cofactor.

It is found in the cytoplasm. The protein localises to the secreted. It localises to the cell surface. It catalyses the reaction (2R)-2-phosphoglycerate = phosphoenolpyruvate + H2O. It functions in the pathway carbohydrate degradation; glycolysis; pyruvate from D-glyceraldehyde 3-phosphate: step 4/5. Functionally, catalyzes the reversible conversion of 2-phosphoglycerate (2-PG) into phosphoenolpyruvate (PEP). It is essential for the degradation of carbohydrates via glycolysis. This chain is Enolase, found in Vibrio vulnificus (strain YJ016).